The sequence spans 88 residues: Small ribosomal subunit protein bS20 (88 aa).

Positions 1–27 (MANSKTAKKRAIQSEKRRQHNASRRSM) are disordered.

It belongs to the bacterial ribosomal protein bS20 family.

Functionally, binds directly to 16S ribosomal RNA. In Shewanella amazonensis (strain ATCC BAA-1098 / SB2B), this protein is Small ribosomal subunit protein bS20.